We begin with the raw amino-acid sequence, 203 residues long: ATP-dependent Clp protease proteolytic subunit (203 aa).

Residue Ser101 is the Nucleophile of the active site. Residue His126 is part of the active site.

It belongs to the peptidase S14 family. As to quaternary structure, component of the chloroplastic Clp protease core complex.

The protein localises to the plastid. It localises to the chloroplast stroma. It carries out the reaction Hydrolysis of proteins to small peptides in the presence of ATP and magnesium. alpha-casein is the usual test substrate. In the absence of ATP, only oligopeptides shorter than five residues are hydrolyzed (such as succinyl-Leu-Tyr-|-NHMec, and Leu-Tyr-Leu-|-Tyr-Trp, in which cleavage of the -Tyr-|-Leu- and -Tyr-|-Trp bonds also occurs).. Its function is as follows. Cleaves peptides in various proteins in a process that requires ATP hydrolysis. Has a chymotrypsin-like activity. Plays a major role in the degradation of misfolded proteins. This Marchantia polymorpha (Common liverwort) protein is ATP-dependent Clp protease proteolytic subunit.